The primary structure comprises 183 residues: MTSFPHPSTSESGPDPDSEPNREEQAHAYCLRLLTARARTRAELSGKLTQRGYDEPVVARVLDRLVEVGLVDDEDFAEQWVRSRHLYAGKGKRALAAELRRKGVDDEVISSSLADIDAGAERDRAERLVRDRLRREKLDDEPGSDLKVKRRMAGMLARRGYSQSMALDVVTVELAGERERRRV.

Residues 1 to 12 (MTSFPHPSTSES) show a composition bias toward polar residues. Positions 1–26 (MTSFPHPSTSESGPDPDSEPNREEQA) are disordered.

Belongs to the RecX family.

It is found in the cytoplasm. Modulates RecA activity. The sequence is that of Regulatory protein RecX from Mycobacterium sp. (strain JLS).